The primary structure comprises 137 residues: Putative pre-16S rRNA nuclease (137 aa).

The protein belongs to the YqgF nuclease family.

It is found in the cytoplasm. Functionally, could be a nuclease involved in processing of the 5'-end of pre-16S rRNA. The chain is Putative pre-16S rRNA nuclease from Anaeromyxobacter sp. (strain Fw109-5).